Here is a 498-residue protein sequence, read N- to C-terminus: Cytochrome P450 monooxygenase apdB (498 aa).

Residues 20 to 40 (ASPQVFKLFVLILFVLLVLKI) form a helical membrane-spanning segment. Residue C457 coordinates heme.

Belongs to the cytochrome P450 family. The cofactor is heme.

It localises to the membrane. It functions in the pathway secondary metabolite biosynthesis. In terms of biological role, cytochrome P450 monooxygenase; part of the gene cluster that mediates the biosynthesis of aspyridones. The polyketide-amino acid backbone preaspyridone A is first assembled by the PKS-NRPS hybrid apdA. The assembly of preaspyridone A is initiated by loading of malonyl-CoA onto apdA, followed by decarboxylation to yield the acetyl starter unit. The growing polyketide chain then elongates into a tetraketide. The adpA PKS module catalyzes three Claisen condensations, as well as beta-keto processing and methylation. Alpha-methylation step during polyketide synthesis is a prerequisite and a key checkpoint for chain transfer between PKS and NRPS modules. The downstream NRPS module contains the condensation (C), adenylation (A), and thiolation (T) domains and catalyzes the incorporation of tyrosine via the formation of the L-tyrosinyl-thioester and the amide linkage between L-tyrosinyl-thioester and the tetraketide. The bimodular assembly line is terminated with a reductase (R) domain that facilitates formation and release of the tetramic acid product. Because apdA lacks a designated enoylreductase (ER) domain, the required activity is provided the enoyl reductase apdC. ApdC appears to operate with different stereoselectivity in different PKS cycle. Combined with apdC, apdA is proposed to synthesize preaspyridone A via about 20 enzymatic steps. A number of oxidative steps performed successively by the cytochrome P450 monooxygenases apdE and apdB are required for the conversion of preaspyridone A to aspyridone A. The cytochrome P450 monooxygenase apdE is responsible for the oxidative dephenylation of preaspyridone A. Finally, the predicted FAD-dependent monooxygenase apdD and the acyl-CoA dehydrogenase apdG may be involved in the transformation of aspyridone A into aspyridone B. The chain is Cytochrome P450 monooxygenase apdB from Emericella nidulans (strain FGSC A4 / ATCC 38163 / CBS 112.46 / NRRL 194 / M139) (Aspergillus nidulans).